Consider the following 382-residue polypeptide: tRNA-specific 2-thiouridylase MnmA (382 aa).

ATP-binding positions include 18 to 25 and Leu44; that span reads AMSGGVDS. Cys112 serves as the catalytic Nucleophile. Residues Cys112 and Cys209 are joined by a disulfide bond. Gly136 serves as a coordination point for ATP. The interval 159–161 is interaction with tRNA; it reads RDQ. The Cysteine persulfide intermediate role is filled by Cys209.

It belongs to the MnmA/TRMU family.

It is found in the cytoplasm. It catalyses the reaction S-sulfanyl-L-cysteinyl-[protein] + uridine(34) in tRNA + AH2 + ATP = 2-thiouridine(34) in tRNA + L-cysteinyl-[protein] + A + AMP + diphosphate + H(+). Its function is as follows. Catalyzes the 2-thiolation of uridine at the wobble position (U34) of tRNA, leading to the formation of s(2)U34. This is tRNA-specific 2-thiouridylase MnmA from Methylobacterium sp. (strain 4-46).